The sequence spans 323 residues: Acetyl esterase (323 aa).

The Involved in the stabilization of the negatively charged intermediate by the formation of the oxyanion hole motif lies at 91-93 (HGG). Catalysis depends on residues S165, D262, and H292.

This sequence belongs to the 'GDXG' lipolytic enzyme family. Homodimer. Interacts with MalT and MelA.

It is found in the cytoplasm. Displays esterase activity towards short chain fatty esters (acyl chain length of up to 8 carbons). Able to hydrolyze triacetylglycerol (triacetin) and tributyrylglycerol (tributyrin), but not trioleylglycerol (triolein) or cholesterol oleate. Negatively regulates MalT activity by antagonizing maltotriose binding. Inhibits MelA galactosidase activity. The chain is Acetyl esterase from Salmonella paratyphi B (strain ATCC BAA-1250 / SPB7).